A 430-amino-acid polypeptide reads, in one-letter code: Adenylosuccinate synthetase (430 aa).

GTP contacts are provided by residues 12-18 and 40-42; these read GDEGKGK and GHT. Aspartate 13 acts as the Proton acceptor in catalysis. 2 residues coordinate Mg(2+): aspartate 13 and glycine 40. Residues 13–16, 38–41, threonine 130, arginine 144, glutamine 224, threonine 239, and arginine 303 each bind IMP; these read DEGK and NAGH. Histidine 41 serves as the catalytic Proton donor. 299–305 provides a ligand contact to substrate; that stretch reads TNTGRAR. Residues arginine 305, 331 to 333, and 413 to 415 each bind GTP; these read KLD and STS.

It belongs to the adenylosuccinate synthetase family. As to quaternary structure, homodimer. It depends on Mg(2+) as a cofactor.

The protein localises to the cytoplasm. The enzyme catalyses IMP + L-aspartate + GTP = N(6)-(1,2-dicarboxyethyl)-AMP + GDP + phosphate + 2 H(+). It participates in purine metabolism; AMP biosynthesis via de novo pathway; AMP from IMP: step 1/2. Plays an important role in the de novo pathway of purine nucleotide biosynthesis. Catalyzes the first committed step in the biosynthesis of AMP from IMP. In Hyphomonas neptunium (strain ATCC 15444), this protein is Adenylosuccinate synthetase.